Reading from the N-terminus, the 930-residue chain is Wings apart-like protein 1 (930 aa).

The interval 540-566 (FSPTSMSGSQSSVSGNEPTTSKTRVGS) is disordered. Over residues 541–553 (SPTSMSGSQSSVS) the composition is skewed to low complexity. Residues 554 to 566 (GNEPTTSKTRVGS) show a composition bias toward polar residues. Residues 854–909 (KEAEKMIVEAYSALLLAFLSTESRSIRNSIKDYLPKRNLAILVPVLERFVAFHMTL) enclose the WAPL domain.

The protein belongs to the WAPL family. Interacts with the cohesin complex throughout the cell cycle. Expressed in roots, leaves, buds and siliques.

Its subcellular location is the nucleus. It localises to the chromosome. In terms of biological role, regulator of sister chromatid cohesion in meiosis which negatively regulates cohesin association with chromatin, acting as an antagonist of CTF7. Cohesion ensures that chromosome partitioning is accurate in both meiotic and mitotic cells and plays an important role in DNA repair. Essential for the prophase removal of cohesin during meiosis thus determining the timely release of meiotic cohesion. Important for proper spindle attachment and assembly during meiosis. Helps to prevent abnormal centromere association during prophase I in meiocytes. Required for early embryonic patterning. Also involved in chromosome segregation during mitosis. The polypeptide is Wings apart-like protein 1 (Arabidopsis thaliana (Mouse-ear cress)).